The sequence spans 647 residues: DNA mismatch repair protein MutL (647 aa).

The interval 393-423 (VSLVANKQQPTVKQAKRSADDSDSEHGKLDY) is disordered. Over residues 409 to 423 (RSADDSDSEHGKLDY) the composition is skewed to basic and acidic residues.

It belongs to the DNA mismatch repair MutL/HexB family.

Functionally, this protein is involved in the repair of mismatches in DNA. It is required for dam-dependent methyl-directed DNA mismatch repair. May act as a 'molecular matchmaker', a protein that promotes the formation of a stable complex between two or more DNA-binding proteins in an ATP-dependent manner without itself being part of a final effector complex. This is DNA mismatch repair protein MutL from Streptococcus thermophilus (strain CNRZ 1066).